The primary structure comprises 505 residues: ATP synthase subunit alpha (505 aa).

170-177 (GDRQTGKT) provides a ligand contact to ATP.

Belongs to the ATPase alpha/beta chains family. F-type ATPases have 2 components, CF(1) - the catalytic core - and CF(0) - the membrane proton channel. CF(1) has five subunits: alpha(3), beta(3), gamma(1), delta(1), epsilon(1). CF(0) has four main subunits: a(1), b(1), b'(1) and c(9-12).

It localises to the cellular thylakoid membrane. It catalyses the reaction ATP + H2O + 4 H(+)(in) = ADP + phosphate + 5 H(+)(out). Produces ATP from ADP in the presence of a proton gradient across the membrane. The alpha chain is a regulatory subunit. The polypeptide is ATP synthase subunit alpha (Prochlorococcus marinus (strain MIT 9515)).